The primary structure comprises 211 residues: Mitotic spindle assembly checkpoint protein MAD2B (211 aa).

An HORMA domain is found at Q13–V203. The mediates interaction with REV1 and REV3L and homodimerization stretch occupies residues E21–A155. Residues V150–S211 form a mediates interaction with ipaB region.

As to quaternary structure, homooligomer. Heterodimer with REV3L. This dimer forms the minimal DNA polymerase zeta complex (Pol-zeta2), with REV3L bearing DNA polymerase catalytic activity, although its activity is very low in this context. Component of the tetrameric Pol-zeta complex (Pol-zeta4), which consists of REV3L, MAD2L2, POLD2 and POLD3; Pol-zeta4 is the fully active form of DNA polymerase zeta. Component of the shieldin complex, consisting of SHLD1, SHLD2, SHLD3 and MAD2L2/REV7. Within the complex, SHLD2 forms a scaffold which interacts with a SHLD3-MAD2L2 subcomplex via its N-terminus, and with SHLD1 via its C-terminus. Interacts with REV1. Interacts with ADAM9. Interacts with CHAMP1. Interacts with FZR1 (in complex with the anaphase promoting complex APC). Interacts with CDC20; PubMed:11459825 could not detect the interaction. Interacts with RAN. Interacts with ELK1; the interaction is direct and recruits MAD2L2 to ELK1-specific promoters. May interact with the JNK kinases MAPK8 and/or MAPK9 to stimulate ELK1 phosphorylation and transcriptional activity upon DNA damage. Interacts with TCF7L2; prevents its binding to promoters and negatively modulates its transcriptional activity. Interacts with YY1AP1. Interacts with S.flexneri protein ipaB; prevents the interaction of MAD2L2 with FZR1 and CDC20 resulting in an activation of the anaphase-promoting complex APC and a cell cycle arrest. Interacts with PRCC; the interaction is direct. Interacts with POGZ. Interacts with ASTE1. Ubiquitously expressed.

The protein resides in the nucleus. It localises to the cytoplasm. It is found in the cytoskeleton. The protein localises to the spindle. Its subcellular location is the chromosome. In terms of biological role, adapter protein able to interact with different proteins and involved in different biological processes. Mediates the interaction between the error-prone DNA polymerase zeta catalytic subunit REV3L and the inserter polymerase REV1, thereby mediating the second polymerase switching in translesion DNA synthesis. Translesion DNA synthesis releases the replication blockade of replicative polymerases, stalled in presence of DNA lesions. Component of the shieldin complex, which plays an important role in repair of DNA double-stranded breaks (DSBs). During G1 and S phase of the cell cycle, the complex functions downstream of TP53BP1 to promote non-homologous end joining (NHEJ) and suppress DNA end resection. Mediates various NHEJ-dependent processes including immunoglobulin class-switch recombination, and fusion of unprotected telomeres. May also regulate another aspect of cellular response to DNA damage through regulation of the JNK-mediated phosphorylation and activation of the transcriptional activator ELK1. Inhibits the FZR1- and probably CDC20-mediated activation of the anaphase promoting complex APC thereby regulating progression through the cell cycle. Regulates TCF7L2-mediated gene transcription and may play a role in epithelial-mesenchymal transdifferentiation. The protein is Mitotic spindle assembly checkpoint protein MAD2B (MAD2L2) of Homo sapiens (Human).